The chain runs to 259 residues: 3-deoxy-manno-octulosonate cytidylyltransferase (259 aa).

It belongs to the KdsB family.

Its subcellular location is the cytoplasm. It carries out the reaction 3-deoxy-alpha-D-manno-oct-2-ulosonate + CTP = CMP-3-deoxy-beta-D-manno-octulosonate + diphosphate. It participates in nucleotide-sugar biosynthesis; CMP-3-deoxy-D-manno-octulosonate biosynthesis; CMP-3-deoxy-D-manno-octulosonate from 3-deoxy-D-manno-octulosonate and CTP: step 1/1. It functions in the pathway bacterial outer membrane biogenesis; lipopolysaccharide biosynthesis. Activates KDO (a required 8-carbon sugar) for incorporation into bacterial lipopolysaccharide in Gram-negative bacteria. The sequence is that of 3-deoxy-manno-octulosonate cytidylyltransferase from Alkalilimnicola ehrlichii (strain ATCC BAA-1101 / DSM 17681 / MLHE-1).